The primary structure comprises 479 residues: MAPVSLPPGFRFHPTDEELITYYLKRKINGLEIELEVIAEVDLYKCEPWDLPGKSLLPSKDQEWYFFSPRDRKYPNGSRTNRATKGGYWKATGKDRRVSWRDRAIGTKKTLVYYRGRAPHGIRTGWVMHEYRLDETECEPSAYGMQDAYALCRVFKKIVIEAKPRDQHRSYVHAMSNVSGNCSSSFDTCSDLEISSTTHQVQNTFQPRFGNERFNSNAISNEDWSQYYGSSYRPFPTPYKVNTEIECSMLQHNIYLPPLRVENSAFSDSDFFTSMTHNNDHGVFDDFTFAASNSNHNNSVGDQVIHVGNYDEQLITSNRHMNQTGYIKEQKIRSSLDNTDEDPGFHGNNTNDNIDIDDFLSFDIYNEDNVNQIEDNEDVNTNETLDSSGFEVVEEETRFNNQMLISTYQTTKILYHQVVPCHTLKVHVNPISHNVEERTLFIEEDKDSWLQRAEKITKTKLTLFSLMAQQYYKCLAIFF.

The NAC domain occupies 6–157; the sequence is LPPGFRFHPT…AYALCRVFKK (152 aa). The DNA-binding element occupies 105–163; it reads IGTKKTLVYYRGRAPHGIRTGWVMHEYRLDETECEPSAYGMQDAYALCRVFKKIVIEAK.

As to expression, expressed in a few sieve element cells before enucleation and in phloem-pole pericycle cells.

Its subcellular location is the nucleus. Transcription factor directing sieve element enucleation and cytosol degradation. Not required for formation of lytic vacuoles. Regulates, with NAC086, the transcription of NEN1, NEN2, NEN3, NEN4, RTM1, RTM2, UBP16, PLDZETA, ABCB10 and At1g26450. The chain is NAC domain-containing protein 45 from Arabidopsis thaliana (Mouse-ear cress).